The primary structure comprises 567 residues: MQPDHRKKSSVEVDFFTEYGEGSRYRIEEVIGKGSYGVVCSAYDTHTGEKVAIKKINDIFEHVSDATRILREIKLLRLLRHPDIVEIKHILLPPSRREFRDIYVVFELMESDLHQVIKANDDLTPEHYQFFLYQLLRGLKYIHTANVFHRDLKPKNILANADCKLKICDFGLARVAFNDTPTAIFWTDYVATRWYRAPELCGSFFSKYTPAIDIWSIGCIFAELLTGKPLFPGKNVVHQLDLMTDMLGTPSAEAIGRVRNEKARRYLSSMRKKKPIPFSHKFPHTDPLALRLLEKMLSFEPKDRPTAEEALADVYFKGLAKVEREPSAQPVTKLEFEFERRRITKEDVRELIYRESLEYHPKMLKEYLDGSEPTNFMYPSAVEHFKKQFAYLEEHYKNGTSHNPPERQQHASLPRACVLYSDNNHPVAQQSSAEVTDGLSKCSIRDERPRGADRNAQMPMSRIPINVPQTIQGAAVARPGKVVGSVLRYNNCGAATGVEALEQQQRRMVRNPAAASQYPKRTQPCKSNRGDEDCATAAEGPSRLKPNTQYIPQKVSAAQDTAMSRWY.

The region spanning 25 to 316 (YRIEEVIGKG…AEEALADVYF (292 aa)) is the Protein kinase domain. Residues 31 to 39 (IGKGSYGVV) and K54 contribute to the ATP site. D151 (proton acceptor) is an active-site residue. At T187 the chain carries Phosphothreonine. Residues 187 to 189 (TDY) carry the TXY motif. Y189 bears the Phosphotyrosine mark. Phosphothreonine is present on T192. Disordered stretches follow at residues 428 to 455 (AQQS…ADRN) and 512 to 567 (PAAA…SRWY). The segment covering 443 to 453 (SIRDERPRGAD) has biased composition (basic and acidic residues). Residues 545–567 (KPNTQYIPQKVSAAQDTAMSRWY) are compositionally biased toward polar residues.

This sequence belongs to the protein kinase superfamily. CMGC Ser/Thr protein kinase family. MAP kinase subfamily. Post-translationally, dually phosphorylated on Thr-187 and Tyr-189, which activates the enzyme.

The catalysed reaction is L-seryl-[protein] + ATP = O-phospho-L-seryl-[protein] + ADP + H(+). The enzyme catalyses L-threonyl-[protein] + ATP = O-phospho-L-threonyl-[protein] + ADP + H(+). Its activity is regulated as follows. Activated by threonine and tyrosine phosphorylation. The chain is Mitogen-activated protein kinase 16 (MPK16) from Arabidopsis thaliana (Mouse-ear cress).